We begin with the raw amino-acid sequence, 71 residues long: Large ribosomal subunit protein uL29 (71 aa).

Belongs to the universal ribosomal protein uL29 family.

The protein is Large ribosomal subunit protein uL29 of Methanocella arvoryzae (strain DSM 22066 / NBRC 105507 / MRE50).